A 1136-amino-acid polypeptide reads, in one-letter code: Unconventional myosin-Ib (1136 aa).

Residues 15–701 (IGVGDTVLLE…TLFQLEDLRK (687 aa)) form the Myosin motor domain. Residue Ser-60 is modified to Phosphoserine. 108–115 (GESGAGKT) contacts ATP. Lys-287 participates in a covalent cross-link: Glycyl lysine isopeptide (Lys-Gly) (interchain with G-Cter in SUMO1); alternate. Lys-287 participates in a covalent cross-link: Glycyl lysine isopeptide (Lys-Gly) (interchain with G-Cter in SUMO2); alternate. The interval 592–599 (YIRCIKPN) is actin-binding. IQ domains follow at residues 704 to 729 (LEDL…LMKR), 730 to 750 (SQVV…YQQI), 750 to 778 (IKSS…HQKR), 780 to 807 (KEAA…DEAR), 808 to 837 (NKHA…EARR), and 837 to 866 (RKHA…ANAG). A TH1 domain is found at 952–1136 (KALYPSSVGQ…NNRLLEVAVP (185 aa)).

This sequence belongs to the TRAFAC class myosin-kinesin ATPase superfamily. Myosin family.

Functionally, motor protein that may participate in process critical to neuronal development and function such as cell migration, neurite outgrowth and vesicular transport. The protein is Unconventional myosin-Ib (Myo1b) of Rattus norvegicus (Rat).